The primary structure comprises 407 residues: Argininosuccinate synthase (407 aa).

ATP contacts are provided by residues 11-19 (AYSGGLDTS) and Ala38. Residues Tyr89 and Ser94 each coordinate L-citrulline. Gly119 contacts ATP. L-aspartate is bound by residues Thr121, Asn125, and Asp126. Residue Asn125 participates in L-citrulline binding. L-citrulline contacts are provided by Arg129, Ser180, Ser189, Glu265, and Tyr277.

This sequence belongs to the argininosuccinate synthase family. Type 1 subfamily. As to quaternary structure, homotetramer.

The protein resides in the cytoplasm. It carries out the reaction L-citrulline + L-aspartate + ATP = 2-(N(omega)-L-arginino)succinate + AMP + diphosphate + H(+). It participates in amino-acid biosynthesis; L-arginine biosynthesis; L-arginine from L-ornithine and carbamoyl phosphate: step 2/3. The protein is Argininosuccinate synthase of Magnetococcus marinus (strain ATCC BAA-1437 / JCM 17883 / MC-1).